The following is a 1003-amino-acid chain: Helicase MOV-10 (1003 aa).

The residue at position 148 (Lys148) is an N6-acetyllysine. Residues Thr160 and Thr254 each carry the phosphothreonine modification. Ser432 carries the phosphoserine modification. 524–531 contacts ATP; that stretch reads GPPGTGKT. The short motif at 645 to 648 is the DEAG box element; that stretch reads DEAG. Residues 921 to 965 are interaction with AGO2 and APOBEC3G; it reads NPLLLGHDPDWKVFLEFCKENGGYTGCPFPAKLDLQQGQNLLQGL. Positions 966–1003 are disordered; it reads SKLSPSTSGPHSHDYLPQEREGEGGLSLQVEPEWRNEL. Phosphoserine occurs at positions 969 and 977. Residues 976 to 988 show a composition bias toward basic and acidic residues; the sequence is HSHDYLPQEREGE.

Belongs to the DNA2/NAM7 helicase family. SDE3 subfamily. As to quaternary structure, interacts with DICER1, AGO2, TARBP2, EIF6 and RPL7A (60S ribosome subunit); they form a large RNA-induced silencing complex (RISC). Interacts with APOBEC3G in an RNA-dependent manner. Interacts with TRIM71 (via NHL repeats) in an RNA-dependent manner. Interacts with both protein products of LIRE1, ORF1p and ORF2p. Interacts with TUT4 and, to a lesser extent, TUT7; the interactions are RNA-dependent. Interacts with AGO2, TNRC6B and UPF1; the interactions are direct and RNA-dependent. Interacts with FMR1; this interaction is direct, occurs in an RNA-dependent manner on polysomes and induces association of MOV10 with RNAs. Interacts with SHFL; the interaction increases in presence of RNA. Interacts with DHX34; the interaction is RNA-independent. Interacts with IKBKE. Interacts with RBM46. In terms of assembly, (Microbial infection) Interacts with the human hepatitis delta virus (HDV) antigen HDAg. (Microbial infection) Interacts with HIV-1 protein GAG. Ubiquitinated by the DCX(DCAF12) complex that specifically recognizes the glutamate-leucine (Glu-Leu) degron at the C-terminus, leading to its degradation. Post-translationally, (Microbial infection) Cleaved and targeted for degradation by picornavirus proteases.

It localises to the cytoplasm. Its subcellular location is the P-body. It is found in the cytoplasmic ribonucleoprotein granule. The protein resides in the stress granule. The protein localises to the nucleus. The enzyme catalyses ATP + H2O = ADP + phosphate + H(+). Its function is as follows. 5' to 3' RNA helicase that is involved in a number of cellular roles ranging from mRNA metabolism and translation, modulation of viral infectivity, inhibition of retrotransposition, or regulation of synaptic transmission. Plays an important role in innate antiviral immunity by promoting type I interferon production. Mechanistically, specifically uses IKKepsilon/IKBKE as the mediator kinase for IRF3 activation. Blocks HIV-1 virus replication at a post-entry step. Counteracts HIV-1 Vif-mediated degradation of APOBEC3G through its helicase activity by interfering with the ubiquitin-proteasome pathway. Also inhibits hepatitis B virus/HBV replication by interacting with HBV RNA and thereby inhibiting the early step of viral reverse transcription. Contributes to UPF1 mRNA target degradation by translocation along 3' UTRs. Required for microRNA (miRNA)-mediated gene silencing by the RNA-induced silencing complex (RISC). Required for both miRNA-mediated translational repression and miRNA-mediated cleavage of complementary mRNAs by RISC. In cooperation with FMR1, regulates miRNA-mediated translational repression by AGO2. Restricts retrotransposition of long interspersed element-1 (LINE-1) in cooperation with TUT4 and TUT7 counteracting the RNA chaperonne activity of L1RE1. Facilitates LINE-1 uridylation by TUT4 and TUT7. Required for embryonic viability and for normal central nervous system development and function. Plays two critical roles in early brain development: suppresses retroelements in the nucleus by directly inhibiting cDNA synthesis, while regulates cytoskeletal mRNAs to influence neurite outgrowth in the cytosol. May function as a messenger ribonucleoprotein (mRNP) clearance factor. In terms of biological role, (Microbial infection) Required for RNA-directed transcription and replication of the human hepatitis delta virus (HDV). Interacts with small capped HDV RNAs derived from genomic hairpin structures that mark the initiation sites of RNA-dependent HDV RNA transcription. In Homo sapiens (Human), this protein is Helicase MOV-10.